The chain runs to 200 residues: Recombination protein RecR (200 aa).

Residues 59-74 (CEKCNTFTEAQVCEVC) form a C4-type zinc finger. One can recognise a Toprim domain in the interval 82–177 (ALLCVVETPA…AVTRLARGVP (96 aa)).

It belongs to the RecR family.

May play a role in DNA repair. It seems to be involved in an RecBC-independent recombinational process of DNA repair. It may act with RecF and RecO. This is Recombination protein RecR from Burkholderia pseudomallei (strain 1106a).